A 156-amino-acid chain; its full sequence is uncharacterized protein (156 aa).

This is an uncharacterized protein from Methanocaldococcus jannaschii (strain ATCC 43067 / DSM 2661 / JAL-1 / JCM 10045 / NBRC 100440) (Methanococcus jannaschii).